The primary structure comprises 347 residues: 4-hydroxythreonine-4-phosphate dehydrogenase (347 aa).

Residues His137 and Thr138 each contribute to the substrate site. Residues His174, His219, and His274 each contribute to the a divalent metal cation site. Residues Lys282, Asn291, and Arg300 each contribute to the substrate site.

Belongs to the PdxA family. Homodimer. Zn(2+) serves as cofactor. Mg(2+) is required as a cofactor. It depends on Co(2+) as a cofactor.

It is found in the cytoplasm. The enzyme catalyses 4-(phosphooxy)-L-threonine + NAD(+) = 3-amino-2-oxopropyl phosphate + CO2 + NADH. It participates in cofactor biosynthesis; pyridoxine 5'-phosphate biosynthesis; pyridoxine 5'-phosphate from D-erythrose 4-phosphate: step 4/5. Its function is as follows. Catalyzes the NAD(P)-dependent oxidation of 4-(phosphooxy)-L-threonine (HTP) into 2-amino-3-oxo-4-(phosphooxy)butyric acid which spontaneously decarboxylates to form 3-amino-2-oxopropyl phosphate (AHAP). The chain is 4-hydroxythreonine-4-phosphate dehydrogenase from Cupriavidus pinatubonensis (strain JMP 134 / LMG 1197) (Cupriavidus necator (strain JMP 134)).